The following is a 645-amino-acid chain: Nucleolar GTP-binding protein 1 (645 aa).

One can recognise an OBG-type G domain in the interval 168-340 (RTLLICGYPN…VRNKACEKLL (173 aa)). GTP is bound by residues 174 to 181 (GYPNVGKS), 220 to 224 (DTPGI), and 288 to 291 (NKTD). The interval 567 to 645 (GQNDSMASGS…KRGIGKSDFR (79 aa)) is disordered. Basic and acidic residues predominate over residues 612–624 (NRDARQGEADRHA).

Belongs to the TRAFAC class OBG-HflX-like GTPase superfamily. OBG GTPase family. NOG subfamily.

It localises to the nucleus. Its subcellular location is the nucleolus. In terms of biological role, involved in the biogenesis of the 60S ribosomal subunit. The protein is Nucleolar GTP-binding protein 1 (NOG1) of Candida glabrata (strain ATCC 2001 / BCRC 20586 / JCM 3761 / NBRC 0622 / NRRL Y-65 / CBS 138) (Yeast).